Here is a 3166-residue protein sequence, read N- to C-terminus: Intermembrane lipid transfer protein VPS13A (3166 aa).

The Chorein N-terminal domain maps to 3 to 116 (FESVVVEVLN…LMETKQQELK (114 aa)). 2 TPR repeats span residues 212–245 (LFAY…ENIV) and 373–406 (LTSK…QQAE). The residue at position 831 (Thr-831) is a Phosphothreonine. The residue at position 835 (Ser-835) is a Phosphoserine. The short motif at 838 to 844 (EFFDAPC) is the FFAT element. Polar residues predominate over residues 1343–1359 (APSSANKDPETMTSGVT). Residues 1343–1365 (APSSANKDPETMTSGVTSPPDHS) form a disordered region. Ser-1410 is modified (phosphoserine). 2 TPR repeats span residues 1806–1840 (AIVE…TLSK) and 1999–2034 (ISVF…VPED). Positions 2202–2447 (VAFHSPYWMV…VYYTWADPVG (246 aa)) constitute an SHR-BD domain. Required for mitochondrial localization stretches follow at residues 2607–3166 (LQPH…SPRL) and 2743–3166 (EYEV…SPRL). TPR repeat units follow at residues 2716 to 2750 (ADLV…VSSV) and 2852 to 2890 (ILGL…PEEF). A required for lipid droplet localization region spans residues 2945–3019 (PAGLREGITR…SSTFQGIKRA (75 aa)).

This sequence belongs to the VPS13 family. Interacts (via FFAT motif) with VAPA and VAPB. Interacts with RAB7A. Interacts with XK.

The protein localises to the mitochondrion outer membrane. Its subcellular location is the endoplasmic reticulum membrane. The protein resides in the endosome membrane. It localises to the lysosome membrane. It is found in the lipid droplet. The protein localises to the golgi apparatus. Its subcellular location is the cytoplasmic vesicle. The protein resides in the secretory vesicle. It localises to the neuronal dense core vesicle. Functionally, mediates the transfer of lipids between membranes at organelle contact sites. Required for the formation or stabilization of ER-mitochondria contact sites which enable transfer of lipids between the ER and mitochondria. Negatively regulates lipid droplet size and motility. Required for efficient lysosomal protein degradation. The chain is Intermembrane lipid transfer protein VPS13A from Mus musculus (Mouse).